The sequence spans 93 residues: Phosphoribosyl-ATP pyrophosphatase (93 aa).

The protein belongs to the PRA-PH family.

The protein resides in the cytoplasm. The catalysed reaction is 1-(5-phospho-beta-D-ribosyl)-ATP + H2O = 1-(5-phospho-beta-D-ribosyl)-5'-AMP + diphosphate + H(+). It participates in amino-acid biosynthesis; L-histidine biosynthesis; L-histidine from 5-phospho-alpha-D-ribose 1-diphosphate: step 2/9. This is Phosphoribosyl-ATP pyrophosphatase from Corynebacterium aurimucosum (strain ATCC 700975 / DSM 44827 / CIP 107346 / CN-1) (Corynebacterium nigricans).